Reading from the N-terminus, the 305-residue chain is Acetyl-coenzyme A carboxylase carboxyl transferase subunit alpha (305 aa).

A CoA carboxyltransferase C-terminal domain is found at 33–280 (AKLESSTALS…KEQILKDLAD (248 aa)).

It belongs to the AccA family. In terms of assembly, acetyl-CoA carboxylase is a heterohexamer composed of biotin carboxyl carrier protein (AccB), biotin carboxylase (AccC) and two subunits each of ACCase subunit alpha (AccA) and ACCase subunit beta (AccD).

It is found in the cytoplasm. It catalyses the reaction N(6)-carboxybiotinyl-L-lysyl-[protein] + acetyl-CoA = N(6)-biotinyl-L-lysyl-[protein] + malonyl-CoA. It functions in the pathway lipid metabolism; malonyl-CoA biosynthesis; malonyl-CoA from acetyl-CoA: step 1/1. In terms of biological role, component of the acetyl coenzyme A carboxylase (ACC) complex. First, biotin carboxylase catalyzes the carboxylation of biotin on its carrier protein (BCCP) and then the CO(2) group is transferred by the carboxyltransferase to acetyl-CoA to form malonyl-CoA. This Treponema denticola (strain ATCC 35405 / DSM 14222 / CIP 103919 / JCM 8153 / KCTC 15104) protein is Acetyl-coenzyme A carboxylase carboxyl transferase subunit alpha.